The primary structure comprises 374 residues: DNA replication and repair protein RecF (374 aa).

30-37 (GHNAQGKT) is an ATP binding site.

Belongs to the RecF family.

The protein resides in the cytoplasm. In terms of biological role, the RecF protein is involved in DNA metabolism; it is required for DNA replication and normal SOS inducibility. RecF binds preferentially to single-stranded, linear DNA. It also seems to bind ATP. The sequence is that of DNA replication and repair protein RecF from Limosilactobacillus reuteri (strain DSM 20016) (Lactobacillus reuteri).